The primary structure comprises 1250 residues: Immunoglobulin superfamily DCC subclass member 4 (1250 aa).

The N-terminal stretch at 1–24 is a signal peptide; sequence MARGDAGRGRGLLALTFCLLAARG. At 25–957 the chain is on the extracellular side; the sequence is ELLLPQETTV…SDSLDMHSVT (933 aa). 4 consecutive Ig-like C2-type domains span residues 29-137, 143-229, 242-330, and 335-421; these read PQET…TAVV, ADFS…ALLS, QDVV…AELR, and PAIT…ASLA. Cysteines 57 and 121 form a disulfide. 3 N-linked (GlcNAc...) asparagine glycosylation sites follow: N90, N102, and N157. C164 and C212 are disulfide-bonded. N252 carries an N-linked (GlcNAc...) asparagine glycan. Cystine bridges form between C265–C312 and C356–C405. 5 consecutive Fibronectin type-III domains span residues 431–525, 527–623, 632–741, 752–845, and 850–945; these read APTR…TLDD, PSAA…TPSM, APAE…APAP, PPAH…TLPD, and PPSD…TLQE. N582 carries N-linked (GlcNAc...) asparagine glycosylation. A helical transmembrane segment spans residues 958–978; it reads GIIVGVCLGLLCLLACMCAGL. The Cytoplasmic portion of the chain corresponds to 979 to 1250; the sequence is RRSPHRESLP…LPRSPVSSSA (272 aa). Phosphothreonine is present on T995. 2 disordered regions span residues 1140 to 1175 and 1215 to 1250; these read SASNGNPDLHLQDLEPEDPLPPEAPDLISGVGDPGQ and PGEVLEETPGDSCQLKSPCPLGASPGLPRSPVSSSA.

The protein belongs to the immunoglobulin superfamily. DCC family.

Its subcellular location is the cell membrane. The protein is Immunoglobulin superfamily DCC subclass member 4 (IGDCC4) of Homo sapiens (Human).